The primary structure comprises 216 residues: Glycerol-3-phosphate acyltransferase 3 (216 aa).

5 helical membrane passes run Leu6–Ser26, Leu58–Ile78, Ile92–Phe112, Phe125–Ile145, and Ile158–Pro178.

Belongs to the PlsY family. As to quaternary structure, probably interacts with PlsX.

It localises to the cell membrane. The catalysed reaction is an acyl phosphate + sn-glycerol 3-phosphate = a 1-acyl-sn-glycero-3-phosphate + phosphate. It participates in lipid metabolism; phospholipid metabolism. Catalyzes the transfer of an acyl group from acyl-phosphate (acyl-PO(4)) to glycerol-3-phosphate (G3P) to form lysophosphatidic acid (LPA). This enzyme utilizes acyl-phosphate as fatty acyl donor, but not acyl-CoA or acyl-ACP. The protein is Glycerol-3-phosphate acyltransferase 3 of Dehalococcoides mccartyi (strain ATCC BAA-2266 / KCTC 15142 / 195) (Dehalococcoides ethenogenes (strain 195)).